The chain runs to 388 residues: Succinate--CoA ligase [ADP-forming] subunit beta (388 aa).

In terms of domain architecture, ATP-grasp spans 9–244; that stretch reads KQLFKEFGLP…PSQDDAREAE (236 aa). Residues lysine 46, 53 to 55, glutamate 99, threonine 102, and glutamate 107 contribute to the ATP site; that span reads GRG. Residues asparagine 199 and aspartate 213 each contribute to the Mg(2+) site. Residues asparagine 264 and 321–323 each bind substrate; that span reads GIV.

The protein belongs to the succinate/malate CoA ligase beta subunit family. As to quaternary structure, heterotetramer of two alpha and two beta subunits. The cofactor is Mg(2+).

It catalyses the reaction succinate + ATP + CoA = succinyl-CoA + ADP + phosphate. The enzyme catalyses GTP + succinate + CoA = succinyl-CoA + GDP + phosphate. It functions in the pathway carbohydrate metabolism; tricarboxylic acid cycle; succinate from succinyl-CoA (ligase route): step 1/1. In terms of biological role, succinyl-CoA synthetase functions in the citric acid cycle (TCA), coupling the hydrolysis of succinyl-CoA to the synthesis of either ATP or GTP and thus represents the only step of substrate-level phosphorylation in the TCA. The beta subunit provides nucleotide specificity of the enzyme and binds the substrate succinate, while the binding sites for coenzyme A and phosphate are found in the alpha subunit. This Idiomarina loihiensis (strain ATCC BAA-735 / DSM 15497 / L2-TR) protein is Succinate--CoA ligase [ADP-forming] subunit beta.